We begin with the raw amino-acid sequence, 474 residues long: Iroquois-class homeodomain protein IRX-2 (474 aa).

A DNA-binding region (homeobox; TALE-type) is located at residues 115 to 177 (DPAYRKNATR…NARRRLKKEN (63 aa)). Disordered regions lie at residues 177 to 220 (NKMT…EDEG), 262 to 373 (EDLE…PGGS), and 420 to 461 (PGET…DTSE). Residue Ser-187 is modified to Phosphoserine. Basic and acidic residues predominate over residues 196 to 210 (DASRSKEESSDKAQD). Residues 262–275 (EDLEDEEDEEDECE) show a composition bias toward acidic residues. Composition is skewed to low complexity over residues 293 to 305 (EAPLLSPAPEAAP) and 358 to 373 (PAAAAPASTGAPPGGS).

Belongs to the TALE/IRO homeobox family. In terms of tissue distribution, expressed in specific and overlapping patterns with Irx1 and Irx3 in the developing and adult metanephric kidney. In the adult metanephros, renal expression is found in the loop of Henle in the S3 proximal tubule segment and in the thick ascending limb (TAL) of the distal tubule.

The protein resides in the nucleus. The chain is Iroquois-class homeodomain protein IRX-2 (Irx2) from Mus musculus (Mouse).